Reading from the N-terminus, the 547-residue chain is Golgi pH regulator homolog (547 aa).

A run of 5 helical transmembrane segments spans residues 56 to 76, 92 to 112, 134 to 154, 164 to 184, and 200 to 220; these read TIAV…FYFL, LSFS…FFEI, INLI…AYGF, LVLL…FPIL, and IGIV…VYVP. Residues 268–305 are disordered; sequence NVNNNNNNNNNYDTYNYNNNYNNNSNNNNNNNNSNNNN. Residues asparagine 290 and asparagine 299 are each glycosylated (N-linked (GlcNAc...) asparagine). 3 consecutive transmembrane segments (helical) span residues 427–447, 469–489, and 517–537; these read VTFW…ASSI, NIVL…VLMM, and WFDF…IFMS.

The protein belongs to the Golgi pH regulator (TC 1.A.38) family.

Its subcellular location is the membrane. The polypeptide is Golgi pH regulator homolog (gpr89) (Dictyostelium discoideum (Social amoeba)).